A 470-amino-acid polypeptide reads, in one-letter code: ATP synthase subunit beta (470 aa).

158-165 (GGAGVGKT) provides a ligand contact to ATP.

The protein belongs to the ATPase alpha/beta chains family. As to quaternary structure, F-type ATPases have 2 components, CF(1) - the catalytic core - and CF(0) - the membrane proton channel. CF(1) has five subunits: alpha(3), beta(3), gamma(1), delta(1), epsilon(1). CF(0) has three main subunits: a(1), b(2) and c(9-12). The alpha and beta chains form an alternating ring which encloses part of the gamma chain. CF(1) is attached to CF(0) by a central stalk formed by the gamma and epsilon chains, while a peripheral stalk is formed by the delta and b chains.

The protein localises to the cell membrane. The enzyme catalyses ATP + H2O + 4 H(+)(in) = ADP + phosphate + 5 H(+)(out). In terms of biological role, produces ATP from ADP in the presence of a proton gradient across the membrane. The catalytic sites are hosted primarily by the beta subunits. This is ATP synthase subunit beta from Halalkalibacterium halodurans (strain ATCC BAA-125 / DSM 18197 / FERM 7344 / JCM 9153 / C-125) (Bacillus halodurans).